Reading from the N-terminus, the 481-residue chain is Mediator of RNA polymerase II transcription subunit 3 (481 aa).

Residues 79–107 (QEKFQMIRSKVLGLTERLQELSNDFEELQ) are a coiled coil. Disordered regions lie at residues 140–261 (AGAS…MGTP) and 415–463 (NTKG…KSAY). The segment covering 148–203 (TPTPAAATPTTAPTPGAGTKKAAKTAPTPTATATIGTPSNNAPTPATTATTPGTQA) has biased composition (low complexity). Over residues 204–213 (KKPRKPRQTK) the composition is skewed to basic residues. Positions 214 to 248 (KQQQAAAAAAAVAQAQAQAQAQAQNQNQNNMQNKN) are enriched in low complexity. The span at 249–259 (ISNPGMNSNMG) shows a compositional bias: polar residues. Over residues 428–458 (MDQNQNQNQSQNQSQNQNQSMNMNMNNDSNN) the composition is skewed to low complexity.

The protein belongs to the Mediator complex subunit 3 family. As to quaternary structure, component of the Mediator complex.

The protein localises to the nucleus. Its function is as follows. Component of the Mediator complex, a coactivator involved in regulated gene transcription of nearly all RNA polymerase II-dependent genes. Mediator functions as a bridge to convey information from gene-specific regulatory proteins to the basal RNA polymerase II transcription machinery. Mediator is recruited to promoters by direct interactions with regulatory proteins and serves as a scaffold for the assembly of a functional preinitiation complex with RNA polymerase II and the general transcription factors. This Candida glabrata (strain ATCC 2001 / BCRC 20586 / JCM 3761 / NBRC 0622 / NRRL Y-65 / CBS 138) (Yeast) protein is Mediator of RNA polymerase II transcription subunit 3 (PGD1).